We begin with the raw amino-acid sequence, 214 residues long: Osteoclast-stimulating factor 1 (214 aa).

One can recognise an SH3 domain in the interval 12–71; the sequence is GQVKVFRALYTFEPRTPDELYFEEGDILYIADMSDTNWWKGTCKGKTGLIPSNYVAEQAE. 3 ANK repeats span residues 72–101, 105–135, and 139–168; these read SIDN…GVNG, AGST…ELNQ, and LGDT…RTDL.

The protein resides in the cytoplasm. Functionally, induces bone resorption, acting probably through a signaling cascade which results in the secretion of factor(s) enhancing osteoclast formation and activity. This Xenopus laevis (African clawed frog) protein is Osteoclast-stimulating factor 1 (ostf1).